The following is an 833-amino-acid chain: Major vault protein (833 aa).

MVP repeat units follow at residues 54-118, 119-170, 171-223, 224-278, 280-328, 329-380, and 381-433; these read RHYC…QLIP, PNTG…TVIY, PNTA…TMLS, DLKA…VSLS, KEYV…LVVG, KEEA…MALD, and KNEG…SIQT.

In terms of assembly, the vault ribonucleoprotein particle is a huge (400 A x 670 A) cage structure of 12.9 MDa. It consists of a dimer of half-vaults, with each half-vault comprising 39 identical major vault protein (MVP) chains, PARP4 and one or more vault RNAs (vRNAs).

The protein resides in the cytoplasm. It is found in the nucleus. Required for normal vault structure. Vaults are multi-subunit structures that may act as scaffolds for proteins involved in signal transduction. Vaults may also play a role in nucleo-cytoplasmic transport. The protein is Major vault protein of Leishmania infantum.